Reading from the N-terminus, the 500-residue chain is L-arabinose isomerase (500 aa).

Residues Glu306, Glu333, His350, and His450 each contribute to the Mn(2+) site.

Belongs to the arabinose isomerase family. Homohexamer. Mn(2+) serves as cofactor.

The enzyme catalyses beta-L-arabinopyranose = L-ribulose. Its pathway is carbohydrate degradation; L-arabinose degradation via L-ribulose; D-xylulose 5-phosphate from L-arabinose (bacterial route): step 1/3. Functionally, catalyzes the conversion of L-arabinose to L-ribulose. The sequence is that of L-arabinose isomerase from Salmonella paratyphi A (strain ATCC 9150 / SARB42).